Reading from the N-terminus, the 116-residue chain is Large ribosomal subunit protein bL17 (116 aa).

The protein belongs to the bacterial ribosomal protein bL17 family. In terms of assembly, part of the 50S ribosomal subunit. Contacts protein L32.

This is Large ribosomal subunit protein bL17 from Synechococcus sp. (strain JA-3-3Ab) (Cyanobacteria bacterium Yellowstone A-Prime).